We begin with the raw amino-acid sequence, 130 residues long: Small ribosomal subunit protein uS8 (130 aa).

It belongs to the universal ribosomal protein uS8 family. Part of the 30S ribosomal subunit.

One of the primary rRNA binding proteins, it binds directly to 16S rRNA central domain where it helps coordinate assembly of the platform of the 30S subunit. In Haloquadratum walsbyi (strain DSM 16790 / HBSQ001), this protein is Small ribosomal subunit protein uS8.